The sequence spans 321 residues: p-hydroxybenzoic acid efflux pump subunit AaeA (321 aa).

The chain crosses the membrane as a helical span at residues 22 to 42 (VVITLVIVLCAIVAIFRVWAF).

The protein belongs to the membrane fusion protein (MFP) (TC 8.A.1) family.

It localises to the cell inner membrane. Its function is as follows. Forms an efflux pump with AaeB. This Pectobacterium atrosepticum (strain SCRI 1043 / ATCC BAA-672) (Erwinia carotovora subsp. atroseptica) protein is p-hydroxybenzoic acid efflux pump subunit AaeA.